Reading from the N-terminus, the 294-residue chain is Fatty acyl-CoA reductase Rv0547c (294 aa).

Residues Ser49, Ser50, Ile52, Arg72, Asp97, Leu98, Asn124, Tyr192, Lys196, Val225, and Thr227 each coordinate NADP(+). Catalysis depends on Tyr192, which acts as the Proton acceptor.

It belongs to the short-chain dehydrogenases/reductases (SDR) family.

It localises to the host mitochondrion. The enzyme catalyses hexadecanal + NADP(+) + CoA = hexadecanoyl-CoA + NADPH + H(+). Its function is as follows. Oxidoreductase that promotes the persistence of M.tuberculosis in host macrophages by reprogramming the fatty acid metabolism in host mitochondria. When localized in the host mitochondria, it potentially acts on unknown lipid substrates and converts them into products that directly or indirectly alter the lipid profile of the mitochondria. This change in lipid profile results in increased mitochondrial membrane fluidity, enhanced endogenous fatty acid oxidation and increased mitochondrial spare respiratory capacity. All these events eventually favor M.tuberculosis persistence in the host macrophages. In vitro, can catalyze the NADPH-dependent reduction of palmitoyl-CoA (hexadecanoyl-CoA). In Mycobacterium tuberculosis (strain ATCC 25618 / H37Rv), this protein is Fatty acyl-CoA reductase Rv0547c.